A 495-amino-acid chain; its full sequence is Aspartyl/glutamyl-tRNA(Asn/Gln) amidotransferase subunit B (495 aa).

It belongs to the GatB/GatE family. GatB subfamily. In terms of assembly, heterotrimer of A, B and C subunits.

The enzyme catalyses L-glutamyl-tRNA(Gln) + L-glutamine + ATP + H2O = L-glutaminyl-tRNA(Gln) + L-glutamate + ADP + phosphate + H(+). It catalyses the reaction L-aspartyl-tRNA(Asn) + L-glutamine + ATP + H2O = L-asparaginyl-tRNA(Asn) + L-glutamate + ADP + phosphate + 2 H(+). Its function is as follows. Allows the formation of correctly charged Asn-tRNA(Asn) or Gln-tRNA(Gln) through the transamidation of misacylated Asp-tRNA(Asn) or Glu-tRNA(Gln) in organisms which lack either or both of asparaginyl-tRNA or glutaminyl-tRNA synthetases. The reaction takes place in the presence of glutamine and ATP through an activated phospho-Asp-tRNA(Asn) or phospho-Glu-tRNA(Gln). The protein is Aspartyl/glutamyl-tRNA(Asn/Gln) amidotransferase subunit B of Methanosarcina mazei (strain ATCC BAA-159 / DSM 3647 / Goe1 / Go1 / JCM 11833 / OCM 88) (Methanosarcina frisia).